The primary structure comprises 243 residues: 1-(5-phosphoribosyl)-5-[(5-phosphoribosylamino)methylideneamino] imidazole-4-carboxamide isomerase (243 aa).

The active-site Proton acceptor is the Asp8. Asp129 acts as the Proton donor in catalysis.

This sequence belongs to the HisA/HisF family.

The protein resides in the cytoplasm. The enzyme catalyses 1-(5-phospho-beta-D-ribosyl)-5-[(5-phospho-beta-D-ribosylamino)methylideneamino]imidazole-4-carboxamide = 5-[(5-phospho-1-deoxy-D-ribulos-1-ylimino)methylamino]-1-(5-phospho-beta-D-ribosyl)imidazole-4-carboxamide. Its pathway is amino-acid biosynthesis; L-histidine biosynthesis; L-histidine from 5-phospho-alpha-D-ribose 1-diphosphate: step 4/9. The chain is 1-(5-phosphoribosyl)-5-[(5-phosphoribosylamino)methylideneamino] imidazole-4-carboxamide isomerase from Brucella abortus (strain 2308).